The chain runs to 120 residues: NAD(P)H-quinone oxidoreductase subunit 3 (120 aa).

Helical transmembrane passes span 10 to 30 (LLVF…ASAL), 64 to 84 (MFAL…PWAV), and 89 to 109 (LGLL…VGLV).

This sequence belongs to the complex I subunit 3 family. NDH-1 can be composed of about 15 different subunits; different subcomplexes with different compositions have been identified which probably have different functions.

The protein resides in the cellular thylakoid membrane. It catalyses the reaction a plastoquinone + NADH + (n+1) H(+)(in) = a plastoquinol + NAD(+) + n H(+)(out). The enzyme catalyses a plastoquinone + NADPH + (n+1) H(+)(in) = a plastoquinol + NADP(+) + n H(+)(out). In terms of biological role, NDH-1 shuttles electrons from an unknown electron donor, via FMN and iron-sulfur (Fe-S) centers, to quinones in the respiratory and/or the photosynthetic chain. The immediate electron acceptor for the enzyme in this species is believed to be plastoquinone. Couples the redox reaction to proton translocation, and thus conserves the redox energy in a proton gradient. Cyanobacterial NDH-1 also plays a role in inorganic carbon-concentration. This chain is NAD(P)H-quinone oxidoreductase subunit 3, found in Synechococcus sp. (strain JA-3-3Ab) (Cyanobacteria bacterium Yellowstone A-Prime).